A 469-amino-acid polypeptide reads, in one-letter code: Rubisco accumulation factor 1, chloroplastic (469 aa).

The transit peptide at 1 to 46 directs the protein to the chloroplast; it reads MLSLSHPHPHPASTTAAAAARHHHRRNAPFAPHHRRRRRFAHLTTS. The segment at 1 to 78 is disordered; the sequence is MLSLSHPHPH…TPPPTAPPDQ (78 aa). Basic residues predominate over residues 20–41; that stretch reads ARHHHRRNAPFAPHHRRRRRFA. Residues 90–281 are N-terminal alpha-helix; it reads LPDKYKDLDL…PARARVEAEL (192 aa). The stretch at 246 to 294 forms a coiled coil; it reads RQSREAIDAEDSVAELERALEVVDTEPARARVEAELDRARRKAAGEEVD. Residues 311 to 456 form a C-terminal beta sheet region; sequence VPVVRLMYGE…AEVLVVVRPP (146 aa).

It belongs to the RAF family.

Its subcellular location is the plastid. The protein localises to the chloroplast. Required for assembly or stability of RuBisCO. Acts at a postchaperonin step to fold and/or assemble the large subunit (LS) into RuBisCO. The chain is Rubisco accumulation factor 1, chloroplastic (RAF1) from Oryza sativa subsp. japonica (Rice).